A 199-amino-acid polypeptide reads, in one-letter code: Superoxide dismutase [Mn] 2 (199 aa).

Mn(2+)-binding residues include His28, His75, Asp157, and His161.

It belongs to the iron/manganese superoxide dismutase family. It depends on Mn(2+) as a cofactor.

It catalyses the reaction 2 superoxide + 2 H(+) = H2O2 + O2. Destroys superoxide anion radicals which are normally produced within the cells and which are toxic to biological systems. In Haloferax volcanii (strain ATCC 29605 / DSM 3757 / JCM 8879 / NBRC 14742 / NCIMB 2012 / VKM B-1768 / DS2) (Halobacterium volcanii), this protein is Superoxide dismutase [Mn] 2 (sod2).